A 104-amino-acid chain; its full sequence is Ribonuclease P protein component 4 (104 aa).

Positions 63, 66, 89, and 92 each coordinate Zn(2+).

Belongs to the eukaryotic/archaeal RNase P protein component 4 family. As to quaternary structure, consists of a catalytic RNA component and at least 4-5 protein subunits. The cofactor is Zn(2+).

Its subcellular location is the cytoplasm. The catalysed reaction is Endonucleolytic cleavage of RNA, removing 5'-extranucleotides from tRNA precursor.. Functionally, part of ribonuclease P, a protein complex that generates mature tRNA molecules by cleaving their 5'-ends. The sequence is that of Ribonuclease P protein component 4 from Methanosphaera stadtmanae (strain ATCC 43021 / DSM 3091 / JCM 11832 / MCB-3).